Here is a 282-residue protein sequence, read N- to C-terminus: Rhomboid protease GlpG (282 aa).

The next 6 helical transmembrane spans lie at alanine 96–phenylalanine 116, glycine 144–glycine 164, leucine 176–glycine 196, serine 197–glycine 217, isoleucine 225–glycine 242, and phenylalanine 247–tryptophan 269. The Nucleophile role is filled by serine 203. The active site involves histidine 256.

The protein belongs to the peptidase S54 family.

The protein resides in the cell inner membrane. The catalysed reaction is Cleaves type-1 transmembrane domains using a catalytic dyad composed of serine and histidine that are contributed by different transmembrane domains.. In terms of biological role, rhomboid-type serine protease that catalyzes intramembrane proteolysis. The polypeptide is Rhomboid protease GlpG (Photorhabdus laumondii subsp. laumondii (strain DSM 15139 / CIP 105565 / TT01) (Photorhabdus luminescens subsp. laumondii)).